The sequence spans 548 residues: Formyltransferase/hydrolase complex Fhc subunit A (548 aa).

His57, His59, and His227 together coordinate Zn(2+).

Belongs to the metallo-dependent hydrolases superfamily. FwdA/FmdA family. In terms of assembly, octaheteromer. Part of the formyltransferase/hydrolase complex fhc; composed of FhcA, FhcB, FhcC and FhcD. Zn(2+) serves as cofactor.

It is found in the cytoplasm. The enzyme catalyses N-formylmethanofuran + H2O = methanofuran + formate. Its pathway is one-carbon metabolism; formaldehyde degradation; formate from formaldehyde (H(4)MPT route): step 4/5. Involved in the transformation of 5-formyl tetrahydromethanopterin (5-formyl-H(4)MPT) to methanofuran (MFR) and formate via the formylmethanofuran (formyl-MFR). May be catalyze the hydrolysis of formylmethanofuran (formyl-MFR) to yield formate and MFR. The chain is Formyltransferase/hydrolase complex Fhc subunit A (fhcA) from Methylorubrum extorquens (strain ATCC 14718 / DSM 1338 / JCM 2805 / NCIMB 9133 / AM1) (Methylobacterium extorquens).